We begin with the raw amino-acid sequence, 324 residues long: Methionyl-tRNA formyltransferase (324 aa).

S114–P117 contributes to the (6S)-5,6,7,8-tetrahydrofolate binding site.

It belongs to the Fmt family.

The catalysed reaction is L-methionyl-tRNA(fMet) + (6R)-10-formyltetrahydrofolate = N-formyl-L-methionyl-tRNA(fMet) + (6S)-5,6,7,8-tetrahydrofolate + H(+). Attaches a formyl group to the free amino group of methionyl-tRNA(fMet). The formyl group appears to play a dual role in the initiator identity of N-formylmethionyl-tRNA by promoting its recognition by IF2 and preventing the misappropriation of this tRNA by the elongation apparatus. The chain is Methionyl-tRNA formyltransferase from Phocaeicola vulgatus (strain ATCC 8482 / DSM 1447 / JCM 5826 / CCUG 4940 / NBRC 14291 / NCTC 11154) (Bacteroides vulgatus).